Reading from the N-terminus, the 271-residue chain is Interleukin-1 alpha (271 aa).

Positions 1–112 (MAKVPDMFED…DSEEEIIKPR (112 aa)) are excised as a propeptide. Lys-82 carries the post-translational modification N6-acetyllysine. Residues Lys-82 and Lys-83 are each lipidated (N6-myristoyl lysine). The interval 82–86 (KKRRL) is nuclear localization signal (NLS). A Phosphoserine modification is found at Ser-87. N-linked (GlcNAc...) asparagine glycosylation is found at Asn-102 and Asn-141.

The protein belongs to the IL-1 family. Monomer. Interacts with TMED10; the interaction mediates the translocation from the cytoplasm into the ERGIC (endoplasmic reticulum-Golgi intermediate compartment) and thereby secretion. Interacts with IL1R1. Interacts with S100A13; this interaction is the first step in the export of IL1A, followed by direct translocation of this complex across the plasma membrane. Acetylated within its nuclear localization sequence, which impacts subcellular localization. Post-translationally, proteolytic processed by CAPN1 in a calcium-dependent manner. Cleavage from 31 kDa precursor to 18 kDa biologically active molecules. In terms of processing, phosphorylated. Phosphorylation greatly enhances susceptibility to digestion and promotes the conversion of pre-IL1A alpha to the biologically active IL1A.

The protein resides in the nucleus. The protein localises to the cytoplasm. It localises to the secreted. Its function is as follows. Cytokine constitutively present intracellularly in nearly all resting non-hematopoietic cells that plays an important role in inflammation and bridges the innate and adaptive immune systems. After binding to its receptor IL1R1 together with its accessory protein IL1RAP, forms the high affinity interleukin-1 receptor complex. Signaling involves the recruitment of adapter molecules such as MYD88, IRAK1 or IRAK4. In turn, mediates the activation of NF-kappa-B and the three MAPK pathways p38, p42/p44 and JNK pathways. Within the cell, acts as an alarmin and cell death results in its liberation in the extracellular space after disruption of the cell membrane to induce inflammation and alert the host to injury or damage. In addition to its role as a danger signal, which occurs when the cytokine is passively released by cell necrosis, directly senses DNA damage and acts as a signal for genotoxic stress without loss of cell integrity. The polypeptide is Interleukin-1 alpha (IL1A) (Homo sapiens (Human)).